Consider the following 405-residue polypeptide: S-adenosylmethionine synthase (405 aa).

Residue His-19 participates in ATP binding. Asp-21 is a binding site for Mg(2+). Glu-47 is a K(+) binding site. Residues Glu-60 and Gln-103 each contribute to the L-methionine site. The flexible loop stretch occupies residues Gln-103–Lys-113. Residues Asp-179–Lys-181, Arg-246–Phe-247, Asp-255, Arg-261–Lys-262, Ala-278, and Lys-282 each bind ATP. Asp-255 lines the L-methionine pocket. Lys-286 serves as a coordination point for L-methionine.

This sequence belongs to the AdoMet synthase family. In terms of assembly, homotetramer; dimer of dimers. Mg(2+) is required as a cofactor. Requires K(+) as cofactor.

The protein resides in the cytoplasm. The enzyme catalyses L-methionine + ATP + H2O = S-adenosyl-L-methionine + phosphate + diphosphate. It functions in the pathway amino-acid biosynthesis; S-adenosyl-L-methionine biosynthesis; S-adenosyl-L-methionine from L-methionine: step 1/1. Its function is as follows. Catalyzes the formation of S-adenosylmethionine (AdoMet) from methionine and ATP. The overall synthetic reaction is composed of two sequential steps, AdoMet formation and the subsequent tripolyphosphate hydrolysis which occurs prior to release of AdoMet from the enzyme. The polypeptide is S-adenosylmethionine synthase (Shouchella clausii (strain KSM-K16) (Alkalihalobacillus clausii)).